A 429-amino-acid chain; its full sequence is Ribosomal RNA small subunit methyltransferase B (429 aa).

S-adenosyl-L-methionine-binding positions include 254 to 260 (CAAPGGK), Asp-277, Asp-303, and Asp-322. Catalysis depends on Cys-375, which acts as the Nucleophile.

The protein belongs to the class I-like SAM-binding methyltransferase superfamily. RsmB/NOP family.

The protein localises to the cytoplasm. The catalysed reaction is cytidine(967) in 16S rRNA + S-adenosyl-L-methionine = 5-methylcytidine(967) in 16S rRNA + S-adenosyl-L-homocysteine + H(+). Specifically methylates the cytosine at position 967 (m5C967) of 16S rRNA. This Shigella boydii serotype 4 (strain Sb227) protein is Ribosomal RNA small subunit methyltransferase B.